The primary structure comprises 375 residues: Deoxyribonuclease-2 (375 aa).

An N-terminal signal peptide occupies residues Met1–Ala21. The N-linked (GlcNAc...) asparagine glycan is linked to Asn131.

Belongs to the DNase II family.

It catalyses the reaction Endonucleolytic cleavage to nucleoside 3'-phosphates and 3'-phosphooligonucleotide end-products.. In terms of biological role, hydrolyzes DNA under acidic conditions with a preference for double-stranded DNA. Implicated in apoptosis. This is Deoxyribonuclease-2 (nuc-1) from Caenorhabditis elegans.